Consider the following 230-residue polypeptide: Ribosome maturation factor RimM (230 aa).

One can recognise a PRC barrel domain in the interval 149–230 (ADEFYWVDLI…RVVVDWEADY (82 aa)).

This sequence belongs to the RimM family. In terms of assembly, binds ribosomal protein uS19.

It localises to the cytoplasm. In terms of biological role, an accessory protein needed during the final step in the assembly of 30S ribosomal subunit, possibly for assembly of the head region. Essential for efficient processing of 16S rRNA. May be needed both before and after RbfA during the maturation of 16S rRNA. It has affinity for free ribosomal 30S subunits but not for 70S ribosomes. This is Ribosome maturation factor RimM from Burkholderia mallei (strain NCTC 10229).